A 249-amino-acid polypeptide reads, in one-letter code: MVYKLVLIRHGESTWNKENKFTGWTDVDLSEKGVQEAHEAGKRLLKAGFTFDIAYTSVLKRAIRTLWILLEELNLYWIPVSRQWRLNERMYGSLQGLNKSETAAKYGEDQVLIWRRSYDIPPPALEESDERYPGNDPRYAKLDKSDLPKTECLKDTVERFLPLWNDTIAPTIKSGQKVLIAAHGNSIRALVKYLDNIADDKIVSMDIPTGIPLVYELDENLKPIKHYYLADESELNAAIQAVANQGKAK.

Residues 9–16 (RHGESTWN), 22–23 (TG), Arg-61, 88–91 (ERMY), Lys-99, 115–116 (RR), and 184–185 (GN) contribute to the substrate site. Residue His-10 is the Tele-phosphohistidine intermediate of the active site. Residue Glu-88 is the Proton donor/acceptor of the active site.

It belongs to the phosphoglycerate mutase family. BPG-dependent PGAM subfamily. As to quaternary structure, homodimer.

It catalyses the reaction (2R)-2-phosphoglycerate = (2R)-3-phosphoglycerate. The enzyme catalyses (2R)-3-phospho-glyceroyl phosphate = (2R)-2,3-bisphosphoglycerate + H(+). Its function is as follows. Catalyzes the interconversion of 2-phosphoglycerate and 3-phosphoglycerate. This chain is Probable phosphoglycerate mutase (gpmA), found in Dictyostelium discoideum (Social amoeba).